Reading from the N-terminus, the 218-residue chain is GTP cyclohydrolase 1 (218 aa).

Residues Cys-109, His-112, and Cys-180 each contribute to the Zn(2+) site.

Belongs to the GTP cyclohydrolase I family. As to quaternary structure, toroid-shaped homodecamer, composed of two pentamers of five dimers.

It carries out the reaction GTP + H2O = 7,8-dihydroneopterin 3'-triphosphate + formate + H(+). Its pathway is cofactor biosynthesis; 7,8-dihydroneopterin triphosphate biosynthesis; 7,8-dihydroneopterin triphosphate from GTP: step 1/1. The chain is GTP cyclohydrolase 1 from Actinobacillus pleuropneumoniae serotype 5b (strain L20).